Reading from the N-terminus, the 454-residue chain is Macrophage scavenger receptor types I and II (454 aa).

A disordered region spans residues 1-22 (MAQWDSFTDQQEDTDSCSESVK). Topologically, residues 1-50 (MAQWDSFTDQQEDTDSCSESVKFDARSNTALLPPNPKNGPPLQEKLKSFK) are cytoplasmic. Ser-27 carries the phosphoserine modification. Residues 51 to 73 (AALIALYLLVFAVLIPIIAIMAA) form a helical; Signal-anchor for type II membrane protein membrane-spanning segment. A spacer region spans residues 74–109 (QLLKWEMKNCTVGSINANSVSSSLLGRGNDSEHEVR). The Extracellular portion of the chain corresponds to 74 to 454 (QLLKWEMKNC…GEDAGVTCTL (381 aa)). 7 N-linked (GlcNAc...) asparagine glycosylation sites follow: Asn-82, Asn-102, Asn-143, Asn-184, Asn-221, Asn-249, and Asn-267. The stretch at 199 to 256 (VKFQENTLKGQEEISKLKERVHNASAEIMSMKEEQVHLEQEIKREVKVLNNITNDLRL) forms a coiled coil. A disordered region spans residues 267–347 (NITLIQGPPG…KGEKGSGSIL (81 aa)). Residues 273–344 (GPPGPPGEKG…KGQKGEKGSG (72 aa)) enclose the Collagen-like domain. The region spanning 353–453 (VRLVGGRGPH…HGEDAGVTCT (101 aa)) is the SRCR domain. 3 disulfide bridges follow: Cys-378–Cys-442, Cys-391–Cys-452, and Cys-422–Cys-432.

Homotrimer. Interacts with MYO18A.

The protein resides in the membrane. Functionally, membrane glycoproteins implicated in the pathologic deposition of cholesterol in arterial walls during atherogenesis. Two types of receptor subunits exist. These receptors mediate the endocytosis of a diverse group of macromolecules, including modified low density lipoproteins (LDL). The protein is Macrophage scavenger receptor types I and II (MSR1) of Oryctolagus cuniculus (Rabbit).